Reading from the N-terminus, the 425-residue chain is MSTKWEKLEGNVGVLTIEVDAKEVNNSIDAAFKKVVKTINVPGFRKGKMPRPLFEQRFGIESLYQDALDIILPKAYGEAIEEAGIFPVDHPEIDIEKFEKNANLIFTAKVTVKPEVKLGEYKGLAVEKVETTVTDEDVENELKSLQERQAELVVKEEGTVENGDTAVIDFEGFVDGEAFEGGKGENYSLAIGSGTFIPGFEEQVIGLKSGESKDVEVSFPEEYHAAELAGKPATFKVTIHEIKTKELPELNDEFAKEADEAVATLDELKAKLRTNLEEGKKHEAEHKVRDEVVELAAANAEIEIPEAMINTELDRMVREFEQRLSQQGMNLELYYQFTGTDADKLKEQMKEDAQKRVRINLVLEAIIEAENIEVTEEEVTAEVEKMAEMYGMPVDAIKQALGSVDALAEDLKVRKAVDFLVENAA.

Positions 163–248 (GDTAVIDFEG…IHEIKTKELP (86 aa)) constitute a PPIase FKBP-type domain.

This sequence belongs to the FKBP-type PPIase family. Tig subfamily.

It is found in the cytoplasm. The enzyme catalyses [protein]-peptidylproline (omega=180) = [protein]-peptidylproline (omega=0). Its function is as follows. Involved in protein export. Acts as a chaperone by maintaining the newly synthesized protein in an open conformation. Functions as a peptidyl-prolyl cis-trans isomerase. The sequence is that of Trigger factor from Bacillus cereus (strain G9842).